The sequence spans 189 residues: Glycerol-3-phosphate acyltransferase (189 aa).

The next 5 helical transmembrane spans lie at 1-21 (MFWL…AIVL), 50-70 (KLAI…VLLA), 77-97 (LHAQ…PLYF), 111-131 (MLMA…LLTF), and 151-171 (LLAW…VMIV).

The protein belongs to the PlsY family. As to quaternary structure, probably interacts with PlsX.

Its subcellular location is the cell inner membrane. It catalyses the reaction an acyl phosphate + sn-glycerol 3-phosphate = a 1-acyl-sn-glycero-3-phosphate + phosphate. It functions in the pathway lipid metabolism; phospholipid metabolism. Functionally, catalyzes the transfer of an acyl group from acyl-phosphate (acyl-PO(4)) to glycerol-3-phosphate (G3P) to form lysophosphatidic acid (LPA). This enzyme utilizes acyl-phosphate as fatty acyl donor, but not acyl-CoA or acyl-ACP. The protein is Glycerol-3-phosphate acyltransferase of Pseudomonas putida (strain ATCC 47054 / DSM 6125 / CFBP 8728 / NCIMB 11950 / KT2440).